The sequence spans 432 residues: MAERTMAMPTQIPADGDTQKENNIRCLTTIGHFGFECLPNQLVSRSIRQGFTFNILCVGETGIGKSTLIDTLFNTNLKDNKSSHFYSNVGLQIQTYELQESNVQLKLTVVETVGYGDQIDKEASYQPIVDYIDAQFEAYLQEELKIKRSLFEYHDSRVHVCLYFISPTGHSLKSLDLLTMKNLDSKVNIIPLIAKADTISKNDLQTFKNKIMSELISNGIQIYQLPTDEETAAQANSSVSGLLPFAVVGSTDEVKVGKRMVRGRHYPWGVLQVENENHCDFVKLRDMLLCTNMENLKEKTHTQHYECYRYQKLQKMGFTDVGPNNQPVSFQEIFEAKRQEFYDQCQREEEELKQRFMQRVKEKEATFKEAEKELQDKFEHLKMIQQEEIRKLEEEKKQLEGEIIDFYKMKAASEALQTQLSTDTKKDKHRKK.

The region spanning 49 to 315 (QGFTFNILCV…ECYRYQKLQK (267 aa)) is the Septin-type G domain. The tract at residues 59–66 (GETGIGKS) is G1 motif. Residues 59 to 66 (GETGIGKS), Gly114, 195 to 203 (KADTISKND), Gly249, and Arg264 each bind GTP. Positions 111–114 (ETVG) are G3 motif. Positions 194-197 (AKAD) are G4 motif. Residues 332–412 (EIFEAKRQEF…IIDFYKMKAA (81 aa)) are a coiled coil. The tract at residues 369 to 432 (EAEKELQDKF…DTKKDKHRKK (64 aa)) is required for interaction with SEPTIN4. Required for migration of cortical neurons during corticogenesis.

It belongs to the TRAFAC class TrmE-Era-EngA-EngB-Septin-like GTPase superfamily. Septin GTPase family. As to quaternary structure, septins polymerize into heterooligomeric protein complexes that form filaments, and can associate with cellular membranes, actin filaments and microtubules. GTPase activity is required for filament formation. Interacts with ACTN4. Interacts with SEPTIN9. Interacts (via C-terminus) with SEPTIN4. As to expression, testis-specific (at protein level).

The protein localises to the cytoplasm. It localises to the cytoskeleton. Its subcellular location is the cell projection. It is found in the axon. The protein resides in the dendrite. The protein localises to the perikaryon. It localises to the perinuclear region. Its subcellular location is the cytoplasmic vesicle. It is found in the secretory vesicle. The protein resides in the acrosome. Its function is as follows. Filament-forming cytoskeletal GTPase. Involved in the migration of cortical neurons and the formation of neuron leading processes during embryonic development. Plays a role in sperm head formation during spermiogenesis, potentially via facilitating localization of ACTN4 to cell filaments. In Homo sapiens (Human), this protein is Septin-14.